The sequence spans 134 residues: Profilin-2 (134 aa).

An intrachain disulfide couples C13 to C118. The short motif at 84 to 100 (AVIRGKKGAGGITIKKT) is the Involved in PIP2 interaction element. T114 carries the post-translational modification Phosphothreonine.

This sequence belongs to the profilin family. In terms of assembly, occurs in many kinds of cells as a complex with monomeric actin in a 1:1 ratio. Phosphorylated by MAP kinases.

The protein resides in the cytoplasm. It localises to the cytoskeleton. Its function is as follows. Binds to actin and affects the structure of the cytoskeleton. At high concentrations, profilin prevents the polymerization of actin, whereas it enhances it at low concentrations. This is Profilin-2 from Olea europaea (Common olive).